Reading from the N-terminus, the 440-residue chain is GTPase Der (440 aa).

2 EngA-type G domains span residues 4–168 and 177–352; these read PVVA…PPEK and IKIA…GRHS. Residues 10–17, 57–61, 120–123, 183–190, 230–234, and 295–298 contribute to the GTP site; these read GRPNVGKS, DTGGL, NKVE, DTAGM, and NKWD. A KH-like domain is found at 353-437; sequence MRISTPGLNA…PIRFVLRKKT (85 aa).

The protein belongs to the TRAFAC class TrmE-Era-EngA-EngB-Septin-like GTPase superfamily. EngA (Der) GTPase family. As to quaternary structure, associates with the 50S ribosomal subunit.

Its function is as follows. GTPase that plays an essential role in the late steps of ribosome biogenesis. In Pelotomaculum thermopropionicum (strain DSM 13744 / JCM 10971 / SI), this protein is GTPase Der.